Here is a 153-residue protein sequence, read N- to C-terminus: Histone H2B.6 (153 aa).

Basic and acidic residues-rich tracts occupy residues 1 to 28 (MAPK…EKAP) and 36 to 53 (EKRL…EGKK). A disordered region spans residues 1 to 60 (MAPKAEKKPAAKKPAEEEPAAEKAEKAPAGKKPKAEKRLPAGKGEKGSGEGKKAGRKKGK). 2 positions are modified to N6-acetyllysine: lysine 7 and lysine 37. Residue lysine 149 forms a Glycyl lysine isopeptide (Lys-Gly) (interchain with G-Cter in ubiquitin) linkage.

It belongs to the histone H2B family. As to quaternary structure, the nucleosome is a histone octamer containing two molecules each of H2A, H2B, H3 and H4 assembled in one H3-H4 heterotetramer and two H2A-H2B heterodimers. The octamer wraps approximately 147 bp of DNA. Can be acetylated to form H2BK6ac and H2BK33ac. Post-translationally, monoubiquitinated by BRE1 to form H2BK143ub1 and deubiquitinated by UBP26. Required for heterochromatic histone H3 di- and trimethylation at H3K4me. May give a specific tag for epigenetic transcriptional activation.

It is found in the nucleus. The protein localises to the chromosome. Core component of nucleosome. Nucleosomes wrap and compact DNA into chromatin, limiting DNA accessibility to the cellular machineries which require DNA as a template. Histones thereby play a central role in transcription regulation, DNA repair, DNA replication and chromosomal stability. DNA accessibility is regulated via a complex set of post-translational modifications of histones, also called histone code, and nucleosome remodeling. The protein is Histone H2B.6 (H2B.6) of Oryza sativa subsp. indica (Rice).